The following is a 588-amino-acid chain: Sulfite reductase [NADPH] hemoprotein beta-component (588 aa).

Cys-442, Cys-448, Cys-487, and Cys-491 together coordinate [4Fe-4S] cluster. Position 491 (Cys-491) interacts with siroheme.

The protein belongs to the nitrite and sulfite reductase 4Fe-4S domain family. In terms of assembly, alpha(8)-beta(8). The alpha component is a flavoprotein, the beta component is a hemoprotein. Requires siroheme as cofactor. It depends on [4Fe-4S] cluster as a cofactor.

The catalysed reaction is hydrogen sulfide + 3 NADP(+) + 3 H2O = sulfite + 3 NADPH + 4 H(+). Its pathway is sulfur metabolism; hydrogen sulfide biosynthesis; hydrogen sulfide from sulfite (NADPH route): step 1/1. In terms of biological role, component of the sulfite reductase complex that catalyzes the 6-electron reduction of sulfite to sulfide. This is one of several activities required for the biosynthesis of L-cysteine from sulfate. This chain is Sulfite reductase [NADPH] hemoprotein beta-component, found in Actinobacillus pleuropneumoniae serotype 5b (strain L20).